Consider the following 147-residue polypeptide: UPAR/Ly6 domain-containing protein CG9338 (147 aa).

A signal peptide spans Met-1–Ala-23. At Ile-24–Thr-126 the chain is on the extracellular side. 5 cysteine pairs are disulfide-bonded: Cys-26/Cys-72, Cys-29/Cys-37, Cys-51/Cys-89, Cys-101/Cys-115, and Cys-118/Cys-123. Residue Asn-68 is glycosylated (N-linked (GlcNAc...) asparagine). The GPI-anchor amidated asparagine moiety is linked to residue Asn-124. Residues Gly-125 to Ala-147 constitute a propeptide, removed in mature form. Residues Ser-127–Ala-147 form a helical membrane-spanning segment.

Belongs to the quiver family.

Its subcellular location is the cell membrane. Its function is as follows. May be involved in regulating neuron excitability. This Drosophila melanogaster (Fruit fly) protein is UPAR/Ly6 domain-containing protein CG9338.